A 386-amino-acid polypeptide reads, in one-letter code: Succinate--CoA ligase [ADP-forming] subunit beta (386 aa).

Positions 9–244 (KAILRSYGVS…LDEEDPKEIE (236 aa)) constitute an ATP-grasp domain. ATP-binding positions include K46, 53–55 (GRG), E99, C102, and E107. Residues N199 and D213 each coordinate Mg(2+). Substrate contacts are provided by residues N264 and 321–323 (GIM).

This sequence belongs to the succinate/malate CoA ligase beta subunit family. As to quaternary structure, heterotetramer of two alpha and two beta subunits. Mg(2+) is required as a cofactor.

The catalysed reaction is succinate + ATP + CoA = succinyl-CoA + ADP + phosphate. The enzyme catalyses GTP + succinate + CoA = succinyl-CoA + GDP + phosphate. It participates in carbohydrate metabolism; tricarboxylic acid cycle; succinate from succinyl-CoA (ligase route): step 1/1. Succinyl-CoA synthetase functions in the citric acid cycle (TCA), coupling the hydrolysis of succinyl-CoA to the synthesis of either ATP or GTP and thus represents the only step of substrate-level phosphorylation in the TCA. The beta subunit provides nucleotide specificity of the enzyme and binds the substrate succinate, while the binding sites for coenzyme A and phosphate are found in the alpha subunit. This is Succinate--CoA ligase [ADP-forming] subunit beta from Bacillus cytotoxicus (strain DSM 22905 / CIP 110041 / 391-98 / NVH 391-98).